We begin with the raw amino-acid sequence, 260 residues long: Adenosylcobinamide-GDP ribazoletransferase (260 aa).

The next 7 helical transmembrane spans lie at 42–62 (PLAGGILGLLAGVALLIANAI), 64–84 (LPPLAAALIAIGALAAMTGAL), 117–137 (FAALTLVIWTGVKASLLMAII), 144–164 (YALLALIGTEAASRAGMLAFW), 192–212 (GLGLALLAIGFLPSGGMVALI), 214–234 (ALVLMTVVLFGFARLCMAKIG), and 240–260 (TLGAAQQIGSLAALIGLVMAL).

Belongs to the CobS family. Mg(2+) serves as cofactor.

It is found in the cell inner membrane. The enzyme catalyses alpha-ribazole + adenosylcob(III)inamide-GDP = adenosylcob(III)alamin + GMP + H(+). The catalysed reaction is alpha-ribazole 5'-phosphate + adenosylcob(III)inamide-GDP = adenosylcob(III)alamin 5'-phosphate + GMP + H(+). The protein operates within cofactor biosynthesis; adenosylcobalamin biosynthesis; adenosylcobalamin from cob(II)yrinate a,c-diamide: step 7/7. Joins adenosylcobinamide-GDP and alpha-ribazole to generate adenosylcobalamin (Ado-cobalamin). Also synthesizes adenosylcobalamin 5'-phosphate from adenosylcobinamide-GDP and alpha-ribazole 5'-phosphate. The chain is Adenosylcobinamide-GDP ribazoletransferase from Brucella abortus (strain S19).